An 867-amino-acid polypeptide reads, in one-letter code: Protein translocase subunit SecA (867 aa).

ATP-binding positions include Gln-86, 104 to 108 (GEGKT), and Asp-499. Residues Cys-848, Cys-850, Cys-859, and His-860 each contribute to the Zn(2+) site.

Belongs to the SecA family. In terms of assembly, monomer and homodimer. Part of the essential Sec protein translocation apparatus which comprises SecA, SecYEG and auxiliary proteins SecDF-YajC and YidC. The cofactor is Zn(2+).

It is found in the cell membrane. It localises to the cytoplasm. It catalyses the reaction ATP + H2O + cellular proteinSide 1 = ADP + phosphate + cellular proteinSide 2.. In terms of biological role, part of the Sec protein translocase complex. Interacts with the SecYEG preprotein conducting channel. Has a central role in coupling the hydrolysis of ATP to the transfer of proteins into and across the cell membrane, serving both as a receptor for the preprotein-SecB complex and as an ATP-driven molecular motor driving the stepwise translocation of polypeptide chains across the membrane. This chain is Protein translocase subunit SecA, found in Wolbachia sp. subsp. Brugia malayi (strain TRS).